Consider the following 358-residue polypeptide: Glutamine synthetase (358 aa).

The GS beta-grasp domain maps to 25-104 (VQAEYIWIDA…VLCECYDNDG (80 aa)). The GS catalytic domain occupies 111-358 (YRAHCKKVMD…ILVETTVLNN (248 aa)).

The protein belongs to the glutamine synthetase family. Homooctamer.

Its subcellular location is the cytoplasm. The enzyme catalyses L-glutamate + NH4(+) + ATP = L-glutamine + ADP + phosphate + H(+). This Cryptococcus neoformans var. neoformans serotype D (strain B-3501A) (Filobasidiella neoformans) protein is Glutamine synthetase (GLN1).